The sequence spans 479 residues: Pup--protein ligase (479 aa).

Glu-17 is a Mg(2+) binding site. Residue Arg-62 coordinates ATP. Tyr-64 provides a ligand contact to Mg(2+). Asp-66 acts as the Proton acceptor in catalysis. Glu-72 provides a ligand contact to Mg(2+). ATP is bound by residues Ser-75 and Trp-432.

Belongs to the Pup ligase/Pup deamidase family. Pup-conjugating enzyme subfamily.

It carries out the reaction ATP + [prokaryotic ubiquitin-like protein]-L-glutamate + [protein]-L-lysine = ADP + phosphate + N(6)-([prokaryotic ubiquitin-like protein]-gamma-L-glutamyl)-[protein]-L-lysine.. It functions in the pathway protein degradation; proteasomal Pup-dependent pathway. Its pathway is protein modification; protein pupylation. Its function is as follows. Catalyzes the covalent attachment of the prokaryotic ubiquitin-like protein modifier Pup to the proteasomal substrate proteins, thereby targeting them for proteasomal degradation. This tagging system is termed pupylation. The ligation reaction involves the side-chain carboxylate of the C-terminal glutamate of Pup and the side-chain amino group of a substrate lysine. This chain is Pup--protein ligase, found in Corynebacterium diphtheriae (strain ATCC 700971 / NCTC 13129 / Biotype gravis).